The chain runs to 119 residues: Nascent polypeptide-associated complex protein (119 aa).

One can recognise an NAC-A/B domain in the interval 5 to 73 (RMNSREMRRL…MREVPKEPEE (69 aa)).

This sequence belongs to the NAC-alpha family. Homodimer. Interacts with the ribosome. Binds ribosomal RNA.

In terms of biological role, contacts the emerging nascent chain on the ribosome. The sequence is that of Nascent polypeptide-associated complex protein from Thermoplasma acidophilum (strain ATCC 25905 / DSM 1728 / JCM 9062 / NBRC 15155 / AMRC-C165).